Reading from the N-terminus, the 143-residue chain is Ayaconin (143 aa).

The signal sequence occupies residues 1–22 (MSFLFFLVVLISIGLWVGPCVA).

As to quaternary structure, interacts with human F12 (inactive). In terms of tissue distribution, salivary gland.

It localises to the secreted. In terms of biological role, inhibits the intrinsic blood coagulation pathway in the host by blocking activation of host coagulation factor XII (F12). The protein is Ayaconin of Lutzomyia ayacuchensis (Sand fly).